A 627-amino-acid polypeptide reads, in one-letter code: MRMLLIHSDYLEYEVKDKALKNPEPISEEQKKGRLEEVLAVFISVEKVDETNPDEVVEKAVNEIKDVASQVKAENVFVYPFAHLSSELAKPDIALEVLREVEEKLREEGFNVKRAPFGYYKAFKLSCKGHPLAELSRTIVPSGEAKAEEEIPEALKKEEEELVSYWYILTPEGELIEVDKFDFTGHENLRKFANYEISKSRIADREPPHVRIMLEQELVDYEPGSDPGNLRYYPKGRLIKGLLEQYVTEKVVEYGAMEVETPIMYDFEHPALEKYLNRFPARQYIVKSGDKKFFLRFAACFGQFLIKKDAIISYRNLPLRMYELTRYSFRREKSGELSGLRRLRAFTMPDMHTVARDLKQAMAEFKKQYKLSMEVLKGVGLTPEDYEVAIRFTEDFWNENRDFIVELAKIIGKPVLIEMWKQRFFYFILKFEFNFVDNLDKAAALSTVQIDVENAERFGITYYDEDGKEKYPLILHCSPSGAIERVMYAILEKQAKLQSKGIKPMFPLWLSPIQVRVIPVSEEVLDYALYVAGKLEGAKIRVDVDDTSDRLNKKIRKAEKEWIPYVIVVGRNEKEQNTITVRRRSDGKQGEMQLEDLIREIRSQTEGFPYKPRPLPLLLSKRPKFRG.

Residues 1-147 (MRMLLIHSDY…TIVPSGEAKA (147 aa)) are editing domain. Residues 208–507 (PHVRIMLEQE…QSKGIKPMFP (300 aa)) are catalytic. Zn(2+)-binding residues include C300, H352, and H476.

The protein belongs to the class-II aminoacyl-tRNA synthetase family. In terms of assembly, homodimer. Zn(2+) is required as a cofactor.

Its subcellular location is the cytoplasm. The enzyme catalyses tRNA(Thr) + L-threonine + ATP = L-threonyl-tRNA(Thr) + AMP + diphosphate + H(+). Its function is as follows. Catalyzes the attachment of threonine to tRNA(Thr) in a two-step reaction: L-threonine is first activated by ATP to form Thr-AMP and then transferred to the acceptor end of tRNA(Thr). Also edits incorrectly charged L-seryl-tRNA(Thr). The protein is Threonine--tRNA ligase of Thermococcus onnurineus (strain NA1).